A 124-amino-acid chain; its full sequence is Translation initiation factor 5A (124 aa).

The disordered stretch occupies residues 27–53 (TSYSTSKPGKHGSAKARVEGTGVFDGQ). Lysine 36 is modified (hypusine).

This sequence belongs to the eIF-5A family.

The protein resides in the cytoplasm. Functions by promoting the formation of the first peptide bond. This Natronomonas pharaonis (strain ATCC 35678 / DSM 2160 / CIP 103997 / JCM 8858 / NBRC 14720 / NCIMB 2260 / Gabara) (Halobacterium pharaonis) protein is Translation initiation factor 5A.